An 85-amino-acid polypeptide reads, in one-letter code: MERKSRKVRTGRVVSDKMDKTVVVAVDTLVKHPLYGRTVRRTRKFMAHDEDNQCRIGDKVKIAETRPLSRHKRWRVAEVLERSQI.

It belongs to the universal ribosomal protein uS17 family. Part of the 30S ribosomal subunit.

Its function is as follows. One of the primary rRNA binding proteins, it binds specifically to the 5'-end of 16S ribosomal RNA. The sequence is that of Small ribosomal subunit protein uS17 from Desulforudis audaxviator (strain MP104C).